We begin with the raw amino-acid sequence, 159 residues long: NADH-quinone oxidoreductase subunit I (159 aa).

4Fe-4S ferredoxin-type domains are found at residues 51–80 (RRYE…IEAD) and 90–119 (TRYD…EGPN). Residues Cys-60, Cys-63, Cys-66, Cys-70, Cys-99, Cys-102, Cys-105, and Cys-109 each contribute to the [4Fe-4S] cluster site.

The protein belongs to the complex I 23 kDa subunit family. In terms of assembly, NDH-1 is composed of 14 different subunits. Subunits NuoA, H, J, K, L, M, N constitute the membrane sector of the complex. [4Fe-4S] cluster serves as cofactor.

The protein localises to the cell membrane. It catalyses the reaction a quinone + NADH + 5 H(+)(in) = a quinol + NAD(+) + 4 H(+)(out). NDH-1 shuttles electrons from NADH, via FMN and iron-sulfur (Fe-S) centers, to quinones in the respiratory chain. The immediate electron acceptor for the enzyme in this species is believed to be ubiquinone. Couples the redox reaction to proton translocation (for every two electrons transferred, four hydrogen ions are translocated across the cytoplasmic membrane), and thus conserves the redox energy in a proton gradient. This is NADH-quinone oxidoreductase subunit I from Rickettsia africae (strain ESF-5).